Reading from the N-terminus, the 587-residue chain is 5-aminolevulinate synthase, erythroid-specific, mitochondrial (587 aa).

The transit peptide at 1-49 directs the protein to the mitochondrion; it reads MVTAAMLLQRCPVLIRSPTGLLGKMIKTHQFLFGIGRCPILATQGPSFS. R163 is a binding site for succinyl-CoA. The pyridoxal 5'-phosphate site is built by C258 and F259. Succinyl-CoA contacts are provided by S280 and K299. 3 residues coordinate pyridoxal 5'-phosphate: S332, H360, and T388. The active site involves K391. An N6-(pyridoxal phosphate)lysine modification is found at K391. Residues T420 and T421 each coordinate pyridoxal 5'-phosphate. T508 contributes to the succinyl-CoA binding site.

It belongs to the class-II pyridoxal-phosphate-dependent aminotransferase family. Homodimer. Interacts with SUCLA2. The cofactor is pyridoxal 5'-phosphate.

The protein resides in the mitochondrion inner membrane. The enzyme catalyses succinyl-CoA + glycine + H(+) = 5-aminolevulinate + CO2 + CoA. It participates in porphyrin-containing compound metabolism; protoporphyrin-IX biosynthesis; 5-aminolevulinate from glycine: step 1/1. Catalyzes the pyridoxal 5'-phosphate (PLP)-dependent condensation of succinyl-CoA and glycine to form aminolevulinic acid (ALA), with CoA and CO2 as by-products. Contributes significantly to heme formation during erythropoiesis. The protein is 5-aminolevulinate synthase, erythroid-specific, mitochondrial (ALAS2) of Bos taurus (Bovine).